We begin with the raw amino-acid sequence, 255 residues long: Adenylate dimethylallyltransferase (255 aa).

The protein belongs to the isopentenyl transferase family.

The catalysed reaction is dimethylallyl diphosphate + AMP = N(6)-(dimethylallyl)adenosine 5'-phosphate + diphosphate. In terms of biological role, transfers dimethylallyl groups to AMP as part of the biosynthesis of cytokinin phytohormones. This chain is Adenylate dimethylallyltransferase (fas4), found in Rhodococcoides fascians (Rhodococcus fascians).